The chain runs to 845 residues: Protein P (845 aa).

Residues 1-179 (MPLSYQHFRK…FCGSPYSWEQ (179 aa)) form a terminal protein domain (TP) region. Residues 180 to 348 (ELQHGRLVIK…YCLSHLVNLR (169 aa)) form a spacer region. The segment at 226–246 (GLQPHQGPLASSQPGRSGSIR) is disordered. A polymerase/reverse transcriptase domain (RT) region spans residues 349-692 (EDRGPCDEHG…YMNLYPVARQ (344 aa)). Residues 359–602 (EHHIRIPRTP…YSLNFMGYVI (244 aa)) enclose the Reverse transcriptase domain. Asp431, Asp553, and Asp554 together coordinate Mg(2+).

The protein belongs to the hepadnaviridae P protein family.

It catalyses the reaction DNA(n) + a 2'-deoxyribonucleoside 5'-triphosphate = DNA(n+1) + diphosphate. It carries out the reaction Endonucleolytic cleavage to 5'-phosphomonoester.. Its activity is regulated as follows. Activated by host HSP70 and HSP40 in vitro to be able to bind the epsilon loop of the pgRNA. Because deletion of the RNase H region renders the protein partly chaperone-independent, the chaperones may be needed indirectly to relieve occlusion of the RNA-binding site by this domain. Inhibited by several reverse-transcriptase inhibitors: Lamivudine, Adefovir and Entecavir. Its function is as follows. Multifunctional enzyme that converts the viral RNA genome into dsDNA in viral cytoplasmic capsids. This enzyme displays a DNA polymerase activity that can copy either DNA or RNA templates, and a ribonuclease H (RNase H) activity that cleaves the RNA strand of RNA-DNA heteroduplexes in a partially processive 3'- to 5'-endonucleasic mode. Neo-synthesized pregenomic RNA (pgRNA) are encapsidated together with the P protein, and reverse-transcribed inside the nucleocapsid. Initiation of reverse-transcription occurs first by binding the epsilon loop on the pgRNA genome, and is initiated by protein priming, thereby the 5'-end of (-)DNA is covalently linked to P protein. Partial (+)DNA is synthesized from the (-)DNA template and generates the relaxed circular DNA (RC-DNA) genome. After budding and infection, the RC-DNA migrates in the nucleus, and is converted into a plasmid-like covalently closed circular DNA (cccDNA). The activity of P protein does not seem to be necessary for cccDNA generation, and is presumably released from (+)DNA by host nuclear DNA repair machinery. This Hepatitis B virus genotype A2 subtype adw2 (isolate Germany/991/1990) (HBV-A) protein is Protein P.